The chain runs to 362 residues: Protein-glutamate methylesterase/protein-glutamine glutaminase 5 (362 aa).

Positions 13 to 130 (RVLVVDDSAL…RRFLEESRVR (118 aa)) constitute a Response regulatory domain. The residue at position 64 (Asp64) is a 4-aspartylphosphate. The CheB-type methylesterase domain maps to 172-362 (LQTTERVVVV…IPPELLRLCR (191 aa)). Active-site residues include Ser184, His210, and Asp306.

Belongs to the CheB family. In terms of processing, phosphorylated by CheA. Phosphorylation of the N-terminal regulatory domain activates the methylesterase activity.

It localises to the cytoplasm. It catalyses the reaction [protein]-L-glutamate 5-O-methyl ester + H2O = L-glutamyl-[protein] + methanol + H(+). The enzyme catalyses L-glutaminyl-[protein] + H2O = L-glutamyl-[protein] + NH4(+). Functionally, involved in chemotaxis. Part of a chemotaxis signal transduction system that modulates chemotaxis in response to various stimuli. Catalyzes the demethylation of specific methylglutamate residues introduced into the chemoreceptors (methyl-accepting chemotaxis proteins or MCP) by CheR. Also mediates the irreversible deamidation of specific glutamine residues to glutamic acid. This chain is Protein-glutamate methylesterase/protein-glutamine glutaminase 5, found in Anaeromyxobacter dehalogenans (strain 2CP-C).